The primary structure comprises 734 residues: Photosystem I P700 chlorophyll a apoprotein A2 (734 aa).

Helical transmembrane passes span 46 to 69 (IFAS…FHVA), 135 to 158 (LYFG…LHLQ), 175 to 199 (LNHH…HVAI), 273 to 291 (IAHH…GHMY), 330 to 353 (LHMQ…QHMY), 369 to 395 (AALY…IFFV), 417 to 439 (AIIS…LYIH), and 517 to 535 (FLVH…LILV). Cysteine 559 and cysteine 568 together coordinate [4Fe-4S] cluster. The next 2 membrane-spanning stretches (helical) occupy residues 575–596 (AFYL…YWHW) and 643–665 (QAVW…MFLI). Residues histidine 654, methionine 662, and tyrosine 670 each coordinate chlorophyll a. Residue tryptophan 671 coordinates phylloquinone. The helical transmembrane segment at 707-727 (LVGLAHFTVGFIFTFAPFVIA) threads the bilayer.

This sequence belongs to the PsaA/PsaB family. In terms of assembly, the PsaA/B heterodimer binds the P700 chlorophyll special pair and subsequent electron acceptors. PSI consists of a core antenna complex that captures photons, and an electron transfer chain that converts photonic excitation into a charge separation. The eukaryotic PSI reaction center is composed of at least 11 subunits. The cofactor is P700 is a chlorophyll a/chlorophyll a' dimer, A0 is one or more chlorophyll a, A1 is one or both phylloquinones and FX is a shared 4Fe-4S iron-sulfur center..

Its subcellular location is the plastid. The protein localises to the chloroplast thylakoid membrane. The enzyme catalyses reduced [plastocyanin] + hnu + oxidized [2Fe-2S]-[ferredoxin] = oxidized [plastocyanin] + reduced [2Fe-2S]-[ferredoxin]. In terms of biological role, psaA and PsaB bind P700, the primary electron donor of photosystem I (PSI), as well as the electron acceptors A0, A1 and FX. PSI is a plastocyanin/cytochrome c6-ferredoxin oxidoreductase, converting photonic excitation into a charge separation, which transfers an electron from the donor P700 chlorophyll pair to the spectroscopically characterized acceptors A0, A1, FX, FA and FB in turn. Oxidized P700 is reduced on the lumenal side of the thylakoid membrane by plastocyanin or cytochrome c6. In Emiliania huxleyi (Coccolithophore), this protein is Photosystem I P700 chlorophyll a apoprotein A2.